A 504-amino-acid polypeptide reads, in one-letter code: Anaerobic nitric oxide reductase transcription regulator NorR (504 aa).

At D57 the chain carries 4-aspartylphosphate. A Sigma-54 factor interaction domain is found at 187–416 (MIGLSPGMTQ…LEHAIHRAVV (230 aa)). Residues 215 to 222 (GETGTGKE) and 278 to 287 (ADNGTLFLDE) contribute to the ATP site. Residues 479–498 (WAACARMLETDVANLHRLAK) constitute a DNA-binding region (H-T-H motif).

It functions in the pathway nitrogen metabolism; nitric oxide reduction. Its function is as follows. Required for the expression of anaerobic nitric oxide (NO) reductase, acts as a transcriptional activator for at least the norVW operon. Activation also requires sigma-54. In Escherichia coli O6:K15:H31 (strain 536 / UPEC), this protein is Anaerobic nitric oxide reductase transcription regulator NorR.